A 213-amino-acid polypeptide reads, in one-letter code: uncharacterized protein (213 aa).

S-adenosyl-L-methionine contacts are provided by Gly53, Glu74, and Asp96.

The protein belongs to the methyltransferase superfamily. YrrT family.

Functionally, could be a S-adenosyl-L-methionine-dependent methyltransferase. This is an uncharacterized protein from Oceanobacillus iheyensis (strain DSM 14371 / CIP 107618 / JCM 11309 / KCTC 3954 / HTE831).